The chain runs to 216 residues: MRGFGAEELLNCYARGVFPMAEGRDDPRIYLLDPDERGIIPLDQFHASRSLRKTVRQDVYQVTINQDFEAVVAGCAQSAPGREETWINESIIRLYSQLHDAGYAHSVECWSGADLVGGLYGVSLGAAFFGESMFSLRRDASKVALVHLIARLRAGGYSLLDTQFTTEHLESFGARTISRSDYRERLAEALIFEADFSALPDEITGAQALQSITQTS.

The protein belongs to the L/F-transferase family.

Its subcellular location is the cytoplasm. It carries out the reaction N-terminal L-lysyl-[protein] + L-leucyl-tRNA(Leu) = N-terminal L-leucyl-L-lysyl-[protein] + tRNA(Leu) + H(+). The catalysed reaction is N-terminal L-arginyl-[protein] + L-leucyl-tRNA(Leu) = N-terminal L-leucyl-L-arginyl-[protein] + tRNA(Leu) + H(+). The enzyme catalyses L-phenylalanyl-tRNA(Phe) + an N-terminal L-alpha-aminoacyl-[protein] = an N-terminal L-phenylalanyl-L-alpha-aminoacyl-[protein] + tRNA(Phe). In terms of biological role, functions in the N-end rule pathway of protein degradation where it conjugates Leu, Phe and, less efficiently, Met from aminoacyl-tRNAs to the N-termini of proteins containing an N-terminal arginine or lysine. This chain is Leucyl/phenylalanyl-tRNA--protein transferase, found in Maricaulis maris (strain MCS10) (Caulobacter maris).